A 131-amino-acid chain; its full sequence is Small ribosomal subunit protein uS9 (131 aa).

The protein belongs to the universal ribosomal protein uS9 family.

The chain is Small ribosomal subunit protein uS9 from Haemophilus ducreyi (strain 35000HP / ATCC 700724).